Here is a 640-residue protein sequence, read N- to C-terminus: Chaperone protein DnaK (640 aa).

Thr199 carries the post-translational modification Phosphothreonine; by autocatalysis. The tract at residues 603 to 640 is disordered; it reads YAAGETESSAAEPGEPQEKTVDAEVVDAEFEEVKDDKK. A compositionally biased stretch (acidic residues) spans 626 to 640; sequence EVVDAEFEEVKDDKK.

It belongs to the heat shock protein 70 family.

Acts as a chaperone. The sequence is that of Chaperone protein DnaK from Methylobacillus flagellatus (strain ATCC 51484 / DSM 6875 / VKM B-1610 / KT).